The sequence spans 236 residues: Small ribosomal subunit protein uS2c (236 aa).

It belongs to the universal ribosomal protein uS2 family.

Its subcellular location is the plastid. The protein resides in the chloroplast. The polypeptide is Small ribosomal subunit protein uS2c (rps2) (Pisum sativum (Garden pea)).